A 492-amino-acid polypeptide reads, in one-letter code: GTPase Der (492 aa).

EngA-type G domains lie at 3–167 (FTLA…EKFE) and 207–382 (LQVA…DVWN). GTP-binding positions include 9–16 (GRPNVGKS), 56–60 (DSAGL), 119–122 (NKSE), 213–220 (GRPNAGKS), 260–264 (DTAGM), and 325–328 (NKWD). The KH-like domain occupies 383 to 469 (RRVPTAALNR…RLTLRGQGDK (87 aa)). Residues 461–492 (LTLRGQGDKNPYKGKKKSTPSRLRKHLEGRKS) form a disordered region. The span at 472-492 (YKGKKKSTPSRLRKHLEGRKS) shows a compositional bias: basic residues.

Belongs to the TRAFAC class TrmE-Era-EngA-EngB-Septin-like GTPase superfamily. EngA (Der) GTPase family. As to quaternary structure, associates with the 50S ribosomal subunit.

In terms of biological role, GTPase that plays an essential role in the late steps of ribosome biogenesis. This Ruegeria sp. (strain TM1040) (Silicibacter sp.) protein is GTPase Der.